A 1168-amino-acid chain; its full sequence is Zinc finger CCHC domain-containing protein 2 (1168 aa).

Disordered regions lie at residues 1-87 (MLRM…GGHA), 209-242 (EGSR…CAKL), 561-693 (KRSL…LGTE), and 932-978 (ATSA…SDST). Residues 43–66 (PPPPPPTGLPRGPPPPPPSPPRGL) are compositionally biased toward pro residues. Low complexity predominate over residues 67 to 78 (EPPVASGPTAGA). Residues 216 to 227 (EDEPGGDDEQDA) are compositionally biased toward acidic residues. Residues 233-242 (GPEGGGCAKL) are compositionally biased toward gly residues. The segment covering 574-588 (PQVEKEKIKKTENRL) has biased composition (basic and acidic residues). The span at 626–635 (SSESYSSPSS) shows a compositional bias: low complexity. Positions 636–655 (PRHDGRESLESEEEKDRDTD) are enriched in basic and acidic residues. A compositionally biased stretch (polar residues) spans 932 to 949 (ATSAQPASTGISPAQSTV). A compositionally biased stretch (pro residues) spans 951–965 (PAVPTHTPGPAPSPS). Polar residues predominate over residues 966–978 (PALTHSTAQSDST). The CCHC-type zinc-finger motif lies at 1121–1138 (VSCYNCGVSGHYAQDCKQ).

This Rattus norvegicus (Rat) protein is Zinc finger CCHC domain-containing protein 2 (Zcchc2).